The chain runs to 519 residues: Importin subunit alpha-5 (519 aa).

Residues 1–58 form the IBB domain; sequence MSLRPSTKTEIRRIRYKVSVDAEEGRRRREDFLVEIRKSKRNENLMKKRRVKVLPPDY. ARM repeat units lie at residues 103 to 143, 146 to 185, 188 to 228, 230 to 269, 272 to 311, 314 to 354, 357 to 396, and 400 to 439; these read SPPT…NIAS, SEHTKVVIDHGVVPLFVQLLASPDDDVREQAIWGLGNVAG, IQCR…NFFR, KPSPPFDLVKHVLPVLKRLVYSDDEQVLIDACWALSNLSD, NENIQSVIEAGVVPRLVELLQHASPVVLVPALRCIGNIVS, SQQT…NITA, EEQIQSVIDANLIPSLVNLAQHAEFDIKKEAIWAISNASV, and PNQIKYLVEQNCIKALCDILVCPDLRIILVSLGGLEMILI.

It belongs to the importin alpha family. Forms a complex with importin subunit beta-1.

It is found in the nucleus envelope. In terms of biological role, binds to conventional NLS motifs and mediates nuclear protein import across the nuclear envelope. The sequence is that of Importin subunit alpha-5 from Arabidopsis thaliana (Mouse-ear cress).